Here is a 191-residue protein sequence, read N- to C-terminus: Thymidine kinase (191 aa).

ATP is bound by residues 9-16 (GSMNSGKT) and 85-88 (DESQ). Glu-86 functions as the Proton acceptor in the catalytic mechanism. Positions 143, 146, 181, and 184 each coordinate Zn(2+).

It belongs to the thymidine kinase family. Homotetramer.

It localises to the cytoplasm. It carries out the reaction thymidine + ATP = dTMP + ADP + H(+). The sequence is that of Thymidine kinase from Listeria innocua serovar 6a (strain ATCC BAA-680 / CLIP 11262).